The following is a 208-amino-acid chain: Outer-membrane lipoprotein carrier protein (208 aa).

The signal sequence occupies residues 1-22; that stretch reads MKKRLCAVLLASPLLFSAAVFA.

This sequence belongs to the LolA family. Monomer.

Its subcellular location is the periplasm. Participates in the translocation of lipoproteins from the inner membrane to the outer membrane. Only forms a complex with a lipoprotein if the residue after the N-terminal Cys is not an aspartate (The Asp acts as a targeting signal to indicate that the lipoprotein should stay in the inner membrane). The sequence is that of Outer-membrane lipoprotein carrier protein from Shewanella baltica (strain OS195).